The chain runs to 177 residues: Large ribosomal subunit protein uL6 (177 aa).

It belongs to the universal ribosomal protein uL6 family. Part of the 50S ribosomal subunit.

Functionally, this protein binds to the 23S rRNA, and is important in its secondary structure. It is located near the subunit interface in the base of the L7/L12 stalk, and near the tRNA binding site of the peptidyltransferase center. This chain is Large ribosomal subunit protein uL6, found in Thioalkalivibrio sulfidiphilus (strain HL-EbGR7).